A 235-amino-acid chain; its full sequence is Elongation factor Tu (235 aa).

The tr-type G domain maps to 1-125; the sequence is KNMITGAAQM…QVDEYIPAPE (125 aa). A GTP-binding site is contributed by 47–50; the sequence is NKQD.

It belongs to the TRAFAC class translation factor GTPase superfamily. Classic translation factor GTPase family. EF-Tu/EF-1A subfamily. In terms of assembly, monomer.

It localises to the cytoplasm. The catalysed reaction is GTP + H2O = GDP + phosphate + H(+). Functionally, GTP hydrolase that promotes the GTP-dependent binding of aminoacyl-tRNA to the A-site of ribosomes during protein biosynthesis. This Leptolyngbya ectocarpi (Phormidium ectocarpi) protein is Elongation factor Tu (tufA).